The chain runs to 463 residues: Lipase 5 (463 aa).

Residues 1–14 (MLYLILFLIAPIYA) form the signal peptide. A disulfide bridge links C110 with C281. S194 (charge relay system) is an active-site residue. N229 carries an N-linked (GlcNAc...) asparagine glycan. Catalysis depends on charge relay system residues D343 and H376. C359 and C404 are disulfide-bonded.

It belongs to the AB hydrolase superfamily. Lipase family. Class Lip subfamily.

It is found in the secreted. The catalysed reaction is a triacylglycerol + H2O = a diacylglycerol + a fatty acid + H(+). Fe(2)+, Fe(3+), Hg(2+) as well as ethylenediaminetetraacetic acid (EDTA) and phenylmethanesulfonyl fluoride (PMSF) strongly inhibit the lipase activity. Surfactants such as Tween 20, Tween 80 and TritonX-100 show also inhibitory effect in the lipase activity. Sodium dodecyl sulfate (SDS) sharply decreases the lipase activity by 85%. Methanol, ethanol, and acetone have also negative effect on the lipase activity, with residual activities at 48%, 24% and 44% respectively. Finally, lipase activity is almost lost in the presence of isopropanol alcohol. In terms of biological role, secreted lipase that is able to hydrolyze both the neutral triacylglycerols and the monopalmitate ester Tween 40, allowing the use of hydrolyzed products as carbon sources. Exhibits a preference for the short and medium chain length p-NP (C4 and C8 acyl group) esters rather than the long chain length p-NP esters (C12, C16 and C18 acyl group). Has broad lipolytic activity, which may be important for colonization and subsequent infection, therefore contributing to the persistence and virulence in human tissue. In Candida albicans (strain SC5314 / ATCC MYA-2876) (Yeast), this protein is Lipase 5.